The chain runs to 157 residues: Protein Smg (157 aa).

It belongs to the Smg family.

The chain is Protein Smg from Salmonella agona (strain SL483).